Here is a 433-residue protein sequence, read N- to C-terminus: 3-phosphoshikimate 1-carboxyvinyltransferase (433 aa).

The 3-phosphoshikimate site is built by Lys-23, Ser-24, and Arg-28. Lys-23 is a phosphoenolpyruvate binding site. Residues Gly-95 and Arg-123 each contribute to the phosphoenolpyruvate site. The 3-phosphoshikimate site is built by Ser-167, Gln-169, Asp-317, and Lys-344. A phosphoenolpyruvate-binding site is contributed by Gln-169. Asp-317 acts as the Proton acceptor in catalysis. Residues Arg-348 and Arg-390 each contribute to the phosphoenolpyruvate site.

This sequence belongs to the EPSP synthase family. In terms of assembly, monomer.

Its subcellular location is the cytoplasm. It catalyses the reaction 3-phosphoshikimate + phosphoenolpyruvate = 5-O-(1-carboxyvinyl)-3-phosphoshikimate + phosphate. It functions in the pathway metabolic intermediate biosynthesis; chorismate biosynthesis; chorismate from D-erythrose 4-phosphate and phosphoenolpyruvate: step 6/7. Its function is as follows. Catalyzes the transfer of the enolpyruvyl moiety of phosphoenolpyruvate (PEP) to the 5-hydroxyl of shikimate-3-phosphate (S3P) to produce enolpyruvyl shikimate-3-phosphate and inorganic phosphate. The sequence is that of 3-phosphoshikimate 1-carboxyvinyltransferase from Staphylococcus epidermidis (strain ATCC 35984 / DSM 28319 / BCRC 17069 / CCUG 31568 / BM 3577 / RP62A).